A 408-amino-acid polypeptide reads, in one-letter code: MSPCENDTPINWKRNLIVAWLGCFLTGAAFSLVMPFLPLYVEQLGVTGHSALNMWSGIVFSITFLFSAIASPFWGGLADRKGRKLMLLRSALGMGIVMVLMGLAQNIWQFLILRALLGLLGGFVPNANALIATQVPRNKSGWALGTLSTGGVSGALLGPMAGGLLADSYGLRPVFFITASVLILCFFVTLFCIREKFQPVSKKEMLHMREVVTSLKNPKLVLSLFVTTLIIQVATGSIAPILTLYVRELAGNVSNVAFISGMIASVPGVAALLSAPRLGKLGDRIGPEKILITALIFSVLLLIPMSYVQTPLQLGILRFLLGAADGALLPAVQTLLVYNSSNQIAGRIFSYNQSFRDIGNVTGPLMGAAISANYGFRAVFLVTAGVVLFNAVYSWNSLRRRRIPQVSN.

11 consecutive transmembrane segments (helical) span residues 16–36 (LIVA…VMPF), 58–78 (IVFS…GGLA), 92–112 (LGMG…QFLI), 115–135 (ALLG…ATQV), 146–166 (TLST…GLLA), 173–193 (PVFF…LFCI), 224–244 (LFVT…ILTL), 256–276 (VAFI…LSAP), 290–310 (ILIT…YVQT), 319–339 (FLLG…LVYN), and 378–398 (AVFL…WNSL).

The protein belongs to the major facilitator superfamily. DHA1 family. MdtG (TC 2.A.1.2.20) subfamily.

It localises to the cell inner membrane. Confers resistance to fosfomycin and deoxycholate. The protein is Multidrug resistance protein MdtG of Escherichia coli O139:H28 (strain E24377A / ETEC).